A 441-amino-acid chain; its full sequence is Double-stranded RNA-binding protein 1 (441 aa).

DRBM domains follow at residues 1 to 71 (MYKS…HLSS), 86 to 155 (SYKS…SLPQ), and 169 to 237 (SYKN…HFED). The segment at 69–88 (LSSLPLPPPPPPSENQSSYK) is disordered.

In terms of biological role, binds double-stranded RNA. The protein is Double-stranded RNA-binding protein 1 (DRB1) of Oryza sativa subsp. japonica (Rice).